We begin with the raw amino-acid sequence, 283 residues long: Quinate/shikimate dehydrogenase (NAD(+)) (283 aa).

The shikimate site is built by S17, T69, K73, N94, and D110. Residues 17-19, T69, K73, N94, and D110 each bind L-quinate; that span reads SRT. K73 functions as the Proton acceptor in the catalytic mechanism. Residues 137–138, D158, R163, 203–206, A213, V228, and G251 each bind NAD(+); these read GV and PMGM. Q258 provides a ligand contact to shikimate. Q258 provides a ligand contact to L-quinate.

The protein belongs to the shikimate dehydrogenase family. In terms of assembly, homodimer.

It carries out the reaction L-quinate + NAD(+) = 3-dehydroquinate + NADH + H(+). The catalysed reaction is shikimate + NAD(+) = 3-dehydroshikimate + NADH + H(+). Its pathway is metabolic intermediate biosynthesis; chorismate biosynthesis; chorismate from D-erythrose 4-phosphate and phosphoenolpyruvate: step 4/7. It functions in the pathway aromatic compound metabolism; 3,4-dihydroxybenzoate biosynthesis; 3-dehydroquinate from D-quinate (NAD(+) route). Its function is as follows. Involved in the biosynthesis of the chorismate, which leads to the biosynthesis of aromatic amino acids, and plays a key role in the quinate degradation pathway. Catalyzes the NAD(+)-dependent oxidation of both quinate and shikimate to 3-dehydroquinate and 3-dehydroshikimate, respectively. It can only use NAD. In Corynebacterium glutamicum (strain ATCC 13032 / DSM 20300 / JCM 1318 / BCRC 11384 / CCUG 27702 / LMG 3730 / NBRC 12168 / NCIMB 10025 / NRRL B-2784 / 534), this protein is Quinate/shikimate dehydrogenase (NAD(+)).